The chain runs to 119 residues: Large ribosomal subunit protein uL24 (119 aa).

It belongs to the universal ribosomal protein uL24 family. As to quaternary structure, part of the 50S ribosomal subunit.

One of two assembly initiator proteins, it binds directly to the 5'-end of the 23S rRNA, where it nucleates assembly of the 50S subunit. Functionally, one of the proteins that surrounds the polypeptide exit tunnel on the outside of the subunit. The polypeptide is Large ribosomal subunit protein uL24 (Paenarthrobacter aurescens (strain TC1)).